Consider the following 509-residue polypeptide: Maturase K (509 aa).

Belongs to the intron maturase 2 family. MatK subfamily.

The protein localises to the plastid. It localises to the chloroplast. Its function is as follows. Usually encoded in the trnK tRNA gene intron. Probably assists in splicing its own and other chloroplast group II introns. The chain is Maturase K from Opuntia quimilo (Cactus).